We begin with the raw amino-acid sequence, 507 residues long: ATP synthase subunit alpha, chloroplastic (507 aa).

An ATP-binding site is contributed by 170-177 (GDRQTGKT).

The protein belongs to the ATPase alpha/beta chains family. As to quaternary structure, F-type ATPases have 2 components, CF(1) - the catalytic core - and CF(0) - the membrane proton channel. CF(1) has five subunits: alpha(3), beta(3), gamma(1), delta(1), epsilon(1). CF(0) has four main subunits: a, b, b' and c.

The protein resides in the plastid. It is found in the chloroplast thylakoid membrane. The catalysed reaction is ATP + H2O + 4 H(+)(in) = ADP + phosphate + 5 H(+)(out). Functionally, produces ATP from ADP in the presence of a proton gradient across the membrane. The alpha chain is a regulatory subunit. This is ATP synthase subunit alpha, chloroplastic from Pelargonium hortorum (Common geranium).